The sequence spans 1939 residues: Myosin-8 (1939 aa).

In terms of domain architecture, Myosin N-terminal SH3-like spans D35–P84. Residues T66 and T71 each carry the phosphothreonine modification. The 696-residue stretch at D88 to D783 folds into the Myosin motor domain. K132 bears the N6,N6,N6-trimethyllysine mark. G181 to T188 provides a ligand contact to ATP. Y391 is modified (phosphotyrosine). T421 carries the post-translational modification Phosphothreonine. Position 426 is a phosphotyrosine (Y426). S627 carries the phosphoserine modification. The actin-binding stretch occupies residues L660–E682. H758 is modified (pros-methylhistidine). Residues K762–G776 are actin-binding. An IQ domain is found at D783–A815. The stretch at L844–E1939 forms a coiled coil. A phosphoserine mark is found at S1093, S1097, S1163, and S1238. T1242 carries the phosphothreonine modification. Phosphoserine is present on S1244. Residue T1256 is modified to Phosphothreonine. S1262 bears the Phosphoserine mark. 2 positions are modified to phosphothreonine: T1266 and T1287. Residues S1293, S1304, and S1307 each carry the phosphoserine modification. Position 1465 is a phosphotyrosine (Y1465). A Phosphothreonine modification is found at T1468. S1475 is modified (phosphoserine). Y1493 carries the phosphotyrosine modification. S1496 is subject to Phosphoserine. Phosphothreonine is present on T1502. S1515 carries the post-translational modification Phosphoserine. The residue at position 1518 (T1518) is a Phosphothreonine. A phosphoserine mark is found at S1555, S1575, S1601, S1604, S1715, and S1727. T1731 is modified (phosphothreonine). Phosphoserine is present on S1740.

Belongs to the TRAFAC class myosin-kinesin ATPase superfamily. Myosin family. Muscle myosin is a hexameric protein that consists of 2 heavy chain subunits (MHC), 2 alkali light chain subunits (MLC) and 2 regulatory light chain subunits (MLC-2).

The protein localises to the cytoplasm. The protein resides in the myofibril. In terms of biological role, muscle contraction. This is Myosin-8 (MYH8) from Canis lupus familiaris (Dog).